The sequence spans 114 residues: Transcription initiation factor IIA subunit 2 (114 aa).

This sequence belongs to the TFIIA subunit 2 family. TFIIA is a heterodimer composed of the large toa1 and the small toa2 subunits.

Its subcellular location is the nucleus. In terms of biological role, TFIIA is a component of the transcription machinery of RNA polymerase II and plays an important role in transcriptional activation. TFIIA in a complex with tbp mediates transcriptional activity. The sequence is that of Transcription initiation factor IIA subunit 2 (toa2) from Fusarium vanettenii (strain ATCC MYA-4622 / CBS 123669 / FGSC 9596 / NRRL 45880 / 77-13-4) (Fusarium solani subsp. pisi).